Consider the following 500-residue polypeptide: Endonuclease domain-containing 1 protein (500 aa).

Residues 1–21 (MGTARWLALGSLFALAGLLEG) form the signal peptide. Positions 293–323 (ERMVQSQKSSSPLSSTRSKRSTLLPPEASEG) are disordered. Over residues 297–317 (QSQKSSSPLSSTRSKRSTLLP) the composition is skewed to low complexity. N6-acetyllysine is present on lysine 407.

This sequence belongs to the DNA/RNA non-specific endonuclease family. In terms of assembly, interacts with RNF26; this interaction is important to modulate innate immune signaling through the cGAS-STING pathway.

The protein localises to the secreted. In terms of biological role, may act as a DNase and a RNase. Plays a role in the modulation of innate immune signaling through the cGAS-STING pathway by interacting with RNF26. The chain is Endonuclease domain-containing 1 protein (ENDOD1) from Homo sapiens (Human).